A 533-amino-acid chain; its full sequence is Putative sel1-like repeat-containing protein L21 (533 aa).

5 Sel1-like repeats span residues 105–140 (VLSQ…NQGL), 141–172 (SFAQ…QSGY), 173–206 (YLSN…NQGC), 207–242 (NISQ…KQGN), and 243–278 (YFSQ…NCGH).

This Acanthamoeba polyphaga mimivirus (APMV) protein is Putative sel1-like repeat-containing protein L21.